Consider the following 342-residue polypeptide: NADH-quinone oxidoreductase subunit H (342 aa).

The next 8 helical transmembrane spans lie at 15-35, 86-106, 119-139, 159-179, 190-210, 251-271, 277-297, and 316-336; these read LLIITALQALAILVPLMLMVA, VLFILAPLLTFILAMIAWAVV, VGVLYLFAISSLGVYGVIIAG, VSYEVSIGFVMVAILLCVGSL, HVWFVLPMLPMAVIFFISGLA, FMICAMTTLLFLGGWLPPFDI, VPGPIWFVLKVCALMFVFFWV, and VFLPFSLVWLLLTACVLELAG.

Belongs to the complex I subunit 1 family. NDH-1 is composed of 14 different subunits. Subunits NuoA, H, J, K, L, M, N constitute the membrane sector of the complex.

The protein localises to the cell inner membrane. The enzyme catalyses a quinone + NADH + 5 H(+)(in) = a quinol + NAD(+) + 4 H(+)(out). Its function is as follows. NDH-1 shuttles electrons from NADH, via FMN and iron-sulfur (Fe-S) centers, to quinones in the respiratory chain. The immediate electron acceptor for the enzyme in this species is believed to be ubiquinone. Couples the redox reaction to proton translocation (for every two electrons transferred, four hydrogen ions are translocated across the cytoplasmic membrane), and thus conserves the redox energy in a proton gradient. This subunit may bind ubiquinone. This Granulibacter bethesdensis (strain ATCC BAA-1260 / CGDNIH1) protein is NADH-quinone oxidoreductase subunit H.